Reading from the N-terminus, the 121-residue chain is Small ribosomal subunit protein uS13 (121 aa).

The disordered stretch occupies residues 94 to 121 (GLPVRGQNTKNNSRTRKGPRRTVANKKK). Over residues 106–121 (SRTRKGPRRTVANKKK) the composition is skewed to basic residues.

The protein belongs to the universal ribosomal protein uS13 family. As to quaternary structure, part of the 30S ribosomal subunit. Forms a loose heterodimer with protein S19. Forms two bridges to the 50S subunit in the 70S ribosome.

Its function is as follows. Located at the top of the head of the 30S subunit, it contacts several helices of the 16S rRNA. In the 70S ribosome it contacts the 23S rRNA (bridge B1a) and protein L5 of the 50S subunit (bridge B1b), connecting the 2 subunits; these bridges are implicated in subunit movement. Contacts the tRNAs in the A and P-sites. The polypeptide is Small ribosomal subunit protein uS13 (Halalkalibacterium halodurans (strain ATCC BAA-125 / DSM 18197 / FERM 7344 / JCM 9153 / C-125) (Bacillus halodurans)).